The chain runs to 452 residues: Pup--protein ligase (452 aa).

Glu9 provides a ligand contact to Mg(2+). Arg53 is a binding site for ATP. Tyr55 is a Mg(2+) binding site. The active-site Proton acceptor is the Asp57. Glu63 contacts Mg(2+). Residues Thr66 and Trp419 each contribute to the ATP site.

This sequence belongs to the Pup ligase/Pup deamidase family. Pup-conjugating enzyme subfamily.

The enzyme catalyses ATP + [prokaryotic ubiquitin-like protein]-L-glutamate + [protein]-L-lysine = ADP + phosphate + N(6)-([prokaryotic ubiquitin-like protein]-gamma-L-glutamyl)-[protein]-L-lysine.. Its pathway is protein degradation; proteasomal Pup-dependent pathway. It functions in the pathway protein modification; protein pupylation. Catalyzes the covalent attachment of the prokaryotic ubiquitin-like protein modifier Pup to the proteasomal substrate proteins, thereby targeting them for proteasomal degradation. This tagging system is termed pupylation. The ligation reaction involves the side-chain carboxylate of the C-terminal glutamate of Pup and the side-chain amino group of a substrate lysine. The polypeptide is Pup--protein ligase (Actinosynnema mirum (strain ATCC 29888 / DSM 43827 / JCM 3225 / NBRC 14064 / NCIMB 13271 / NRRL B-12336 / IMRU 3971 / 101)).